The sequence spans 283 residues: MLQIALPNKGALADGAVTLADEAGYNCRRRGRELSVRDPDYGVEFVFLRPRDIATYVSKGIIDLGVTGLDLTYDSGADVTHVLDLGFGAARFCYAAPKSSDLTPDAFTADTRIATSYDTLVRRDLEQRGVDARVISLDGAVEISIQLGVADVIADVVQTGRTIDEAGLATIGAPILNTEAVLVAQNGHTMEKDAAQHFAERVKGIIVAREYVVVEYDLPEEHLPEARKITPGIESPTVSPLNKDGWVAVKAMIERESVNAVMDDLTELDARGIIVTDIRTCRM.

It belongs to the ATP phosphoribosyltransferase family. Long subfamily. It depends on Mg(2+) as a cofactor.

Its subcellular location is the cytoplasm. It catalyses the reaction 1-(5-phospho-beta-D-ribosyl)-ATP + diphosphate = 5-phospho-alpha-D-ribose 1-diphosphate + ATP. The protein operates within amino-acid biosynthesis; L-histidine biosynthesis; L-histidine from 5-phospho-alpha-D-ribose 1-diphosphate: step 1/9. Its activity is regulated as follows. Feedback inhibited by histidine. In terms of biological role, catalyzes the condensation of ATP and 5-phosphoribose 1-diphosphate to form N'-(5'-phosphoribosyl)-ATP (PR-ATP). Has a crucial role in the pathway because the rate of histidine biosynthesis seems to be controlled primarily by regulation of HisG enzymatic activity. In Salinibacter ruber (strain DSM 13855 / M31), this protein is ATP phosphoribosyltransferase.